The chain runs to 536 residues: Light-independent protochlorophyllide reductase subunit B (536 aa).

D36 is a [4Fe-4S] cluster binding site. D292 acts as the Proton donor in catalysis. Substrate is bound at residue 427–428 (GL). The tract at residues 447–489 (QSHLGHLGGHQSQTEQQQSQAATNPSTQSNTDSSSEESPLWTP) is disordered. Residues 448–469 (SHLGHLGGHQSQTEQQQSQAAT) are compositionally biased toward low complexity. The span at 470–483 (NPSTQSNTDSSSEE) shows a compositional bias: polar residues.

It belongs to the ChlB/BchB/BchZ family. In terms of assembly, protochlorophyllide reductase is composed of three subunits; ChlL, ChlN and ChlB. Forms a heterotetramer of two ChlB and two ChlN subunits. [4Fe-4S] cluster serves as cofactor.

It catalyses the reaction chlorophyllide a + oxidized 2[4Fe-4S]-[ferredoxin] + 2 ADP + 2 phosphate = protochlorophyllide a + reduced 2[4Fe-4S]-[ferredoxin] + 2 ATP + 2 H2O. Its pathway is porphyrin-containing compound metabolism; chlorophyll biosynthesis (light-independent). Its function is as follows. Component of the dark-operative protochlorophyllide reductase (DPOR) that uses Mg-ATP and reduced ferredoxin to reduce ring D of protochlorophyllide (Pchlide) to form chlorophyllide a (Chlide). This reaction is light-independent. The NB-protein (ChlN-ChlB) is the catalytic component of the complex. The sequence is that of Light-independent protochlorophyllide reductase subunit B from Prochlorococcus marinus (strain MIT 9303).